A 443-amino-acid polypeptide reads, in one-letter code: Regulator of sigma E protease (443 aa).

A Zn(2+)-binding site is contributed by His-21. Glu-22 is a catalytic residue. His-25 is a binding site for Zn(2+). A helical transmembrane segment spans residues 98-118 (FVIIAGPLANFIFAIFAYWVI). PDZ domains follow at residues 106–185 (ANFI…SPFN) and 198–287 (NWTF…TPVR). The next 2 membrane-spanning stretches (helical) occupy residues 369–389 (LVYF…MNLF) and 423–443 (IGAA…FLRL).

This sequence belongs to the peptidase M50B family. As to quaternary structure, interacts with RseA. The cofactor is Zn(2+).

It localises to the cell inner membrane. A site-2 regulated intramembrane protease (S2P) that cleaves a peptide bond in the transmembrane region of RseA. Part of a regulated intramembrane proteolysis (RIP) cascade. Acts on DegS-cleaved RseA to release the cytoplasmic domain of RseA. This provides the cell with sigma-E (RpoE) activity through the proteolysis of RseA. This Haemophilus influenzae (strain ATCC 51907 / DSM 11121 / KW20 / Rd) protein is Regulator of sigma E protease (rsep).